A 215-amino-acid chain; its full sequence is Nitrate/nitrite response regulator protein NarP (215 aa).

The region spanning 8 to 124 (QVMIVDDHPL…VLLEAIRAGA (117 aa)) is the Response regulatory domain. Position 59 is a 4-aspartylphosphate (Asp-59). Positions 147-212 (EEDPFSVLTE…AATILFLQQR (66 aa)) constitute an HTH luxR-type domain. The H-T-H motif DNA-binding region spans 171–190 (NKQIASVLNISEQTVKVHIR).

This protein activates the expression of the nitrate reductase (narGHJI) and formate dehydrogenase-N (fdnGHI) operons and represses the transcription of the fumarate reductase (frdABCD) operon in response to a nitrate/nitrite induction signal transmitted by either the NarX or NarQ proteins. The polypeptide is Nitrate/nitrite response regulator protein NarP (narP) (Escherichia coli (strain K12)).